Consider the following 887-residue polypeptide: Semaphorin-6B (887 aa).

Residues 1-26 (MWTPRAPPPRPALLFLLLLLLRVTHG) form the signal peptide. Residues 27-605 (LFPDEPPPLS…VSVNLLVTSS (579 aa)) lie on the Extracellular side of the membrane. The Sema domain occupies 32-525 (PPPLSVAPRD…FPRCVVRVPV (494 aa)). N-linked (GlcNAc...) asparagine glycosylation is present at Asn75. Cystine bridges form between Cys117/Cys127 and Cys145/Cys154. N-linked (GlcNAc...) asparagine glycans are attached at residues Asn156, Asn168, and Asn292. 2 cysteine pairs are disulfide-bonded: Cys268-Cys379 and Cys293-Cys338. N-linked (GlcNAc...) asparagine glycosylation is found at Asn387, Asn442, and Asn463. 4 disulfide bridges follow: Cys487–Cys519, Cys528–Cys546, Cys534–Cys580, and Cys538–Cys554. The chain crosses the membrane as a helical span at residues 606–626 (VAAFVVGAVVSGFSVGWFVGL). Residues 627 to 887 (RERRELARRK…TGERTAPPVP (261 aa)) are Cytoplasmic-facing. 3 disordered regions span residues 656–675 (LGERRGTGTGGRGGAGGGPG), 697–717 (HGGPHDLDSGLLPTPEQTPLP), and 759–887 (APEQ…PPVP). The segment covering 662–674 (TGTGGRGGAGGGP) has biased composition (gly residues). Position 667 is an omega-N-methylarginine (Arg667). A compositionally biased stretch (low complexity) spans 707-717 (LLPTPEQTPLP).

This sequence belongs to the semaphorin family.

The protein localises to the cell membrane. Functionally, functions as a cell surface repellent for mossy fibers of developing neurons in the hippocampus where it plays a role in axon guidance. May function through the PLXNA4 receptor expressed by mossy cell axons. The protein is Semaphorin-6B (Sema6b) of Rattus norvegicus (Rat).